The sequence spans 293 residues: Biphenyl-2,3-diol 1,2-dioxygenase (293 aa).

2 VOC domains span residues 5–119 (RLGY…IYYG) and 143–265 (GIGH…FGWG). Fe cation contacts are provided by H146, H210, and E261.

Belongs to the extradiol ring-cleavage dioxygenase family. As to quaternary structure, homooctamer. Requires Fe(2+) as cofactor.

The enzyme catalyses biphenyl-2,3-diol + O2 = 2-hydroxy-6-oxo-6-phenylhexa-2,4-dienoate + H(+). It functions in the pathway xenobiotic degradation; biphenyl degradation; 2-hydroxy-2,4-pentadienoate and benzoate from biphenyl: step 3/4. The sequence is that of Biphenyl-2,3-diol 1,2-dioxygenase (bphC) from Pseudomonas sp. (strain KKS102).